The sequence spans 293 residues: Energy-coupling factor transporter ATP-binding protein EcfA2 (293 aa).

An ABC transporter domain is found at 3–246 (ITFQKVEHRY…ADELEKIGVD (244 aa)). Position 40–47 (40–47 (GHTGSGKS)) interacts with ATP.

It belongs to the ABC transporter superfamily. Energy-coupling factor EcfA family. As to quaternary structure, forms a stable energy-coupling factor (ECF) transporter complex composed of 2 membrane-embedded substrate-binding proteins (S component), 2 ATP-binding proteins (A component) and 2 transmembrane proteins (T component).

It is found in the cell membrane. Functionally, ATP-binding (A) component of a common energy-coupling factor (ECF) ABC-transporter complex. Unlike classic ABC transporters this ECF transporter provides the energy necessary to transport a number of different substrates. In Bacillus anthracis, this protein is Energy-coupling factor transporter ATP-binding protein EcfA2.